A 527-amino-acid chain; its full sequence is Fusicoccadiene C-8 hydroxylase (527 aa).

A helical membrane pass occupies residues Gly-15–Phe-35. Asn-125 carries an N-linked (GlcNAc...) asparagine glycan. Position 465 (Cys-465) interacts with heme. An N-linked (GlcNAc...) asparagine glycan is attached at Asn-496.

The protein belongs to the cytochrome P450 family. Requires heme as cofactor.

The protein localises to the membrane. It participates in mycotoxin biosynthesis. Functionally, cytochrome P450 monooxygenase; part of the gene cluster that mediates the biosynthesis of the diterpene glucoside brassicicene C. In the first step of the brassicicene C biosynthesis, the bifunctional diterpene synthase bsc8 that possesses both prenyl transferase and terpene cyclase activity, converts isopentenyl diphosphate and dimethylallyl diphosphate into geranylgeranyl diphosphate (GGDP) that is further converted into fusicocca-2,10(14)-diene, the first precursor for brassicicene C. Fusicocca-2,10(14)-diene is then substrate of cytochrome P450 monooxygenase bsc1 for hydroxylation at the C-8 position. Oxidation at C-16 position to aldehyde is then catalyzed by the cytochrome P450 monooyxygenase bsc7, yielding fusicocca-2,10(14)-diene-8-beta,16-diol. Follows the isomerization of the double bond and reduction of aldehyde to alcohol catalyzed by the short-chain dehydrogenase/reductase bsc3 to yield the diol compound fusicocca-1,10(14)-diene-8 beta,16-diol. The next step is the oxidation at the C-3 position of fusicocca-2,10(14)-diene-8-beta,16-diol catalyzed by the alpha-ketoglutarate dependent dioxygenase bsc9, to produce a triol compound. Methylation of the hydroxy group at position 16 is performed by the methyltransferase bsc6. 16-O-methylation is followed by oxidation at the C-13 position to ketone and an alkyl shift of the methyl group leads to brassicicene C. Although the probable acetyltransferase bsc4 is included in the gene cluster, no acetylation reactions are necessary for brassicicene C biosynthesis. However, the fact that brassicicene E, which is a structurally related compound having an acetoxy group at position 12, was previously isolated from another strain of A.brassicicola suggests that the ATCC 96836 strain might also produce a small amount of brassicicene E. This chain is Fusicoccadiene C-8 hydroxylase, found in Alternaria brassicicola (Dark leaf spot agent).